Reading from the N-terminus, the 221-residue chain is Endo-1,4-beta-xylanase 1 (221 aa).

The first 22 residues, 1–22, serve as a signal peptide directing secretion; it reads MKFFATIAALVVAAVAAPVAEA. Residues 29-221 enclose the GH11 domain; sequence PMLIERAGPG…GTGSASVTVS (193 aa). Catalysis depends on Glu114, which acts as the Nucleophile. The Proton donor role is filled by Glu208.

This sequence belongs to the glycosyl hydrolase 11 (cellulase G) family.

The protein resides in the secreted. It carries out the reaction Endohydrolysis of (1-&gt;4)-beta-D-xylosidic linkages in xylans.. It functions in the pathway glycan degradation; xylan degradation. In terms of biological role, endo-1,4-beta-xylanase involved in the hydrolysis of xylan, a major structural heterogeneous polysaccharide found in plant biomass representing the second most abundant polysaccharide in the biosphere, after cellulose. Hydrolyzes xylans from oat spelt and birchwood at similar rates, but it has no detectable activity toward Avicel or carboxymethyl cellulose. This Aureobasidium pullulans (Black yeast) protein is Endo-1,4-beta-xylanase 1 (xynI).